A 620-amino-acid polypeptide reads, in one-letter code: Endoglucanase 21 (620 aa).

Residues 1–39 (MYGRDPWGGPLEINAADSMTDDDRSRNLQDLDRATPSRP) form a disordered region. Over 1 to 70 (MYGRDPWGGP…DLGCILVSRK (70 aa)) the chain is Cytoplasmic. Basic and acidic residues predominate over residues 21-39 (DDDRSRNLQDLDRATPSRP). The helical; Signal-anchor for type II membrane protein transmembrane segment at 71–91 (IFLWTLGTIVVTALLSGFITL) threads the bilayer. Residues 92 to 620 (IVKTLPHHHH…TPPPPAPWTP (529 aa)) are Extracellular-facing. Residues asparagine 108 and asparagine 134 are each glycosylated (N-linked (GlcNAc...) asparagine). Residue aspartate 166 is the Nucleophile of the active site. Asparagine 217, asparagine 325, asparagine 346, asparagine 409, asparagine 426, and asparagine 482 each carry an N-linked (GlcNAc...) asparagine glycan. Residues histidine 514 and aspartate 561 contribute to the active site. Residue asparagine 567 is glycosylated (N-linked (GlcNAc...) asparagine). Residue glutamate 570 is part of the active site.

The protein belongs to the glycosyl hydrolase 9 (cellulase E) family. As to expression, expressed in conductive tissues of young roots, cotyledons, rosette leaves, cauline leaves and sepals. Expressed in the leaf trichome support cells.

It is found in the cell membrane. It carries out the reaction Endohydrolysis of (1-&gt;4)-beta-D-glucosidic linkages in cellulose, lichenin and cereal beta-D-glucans.. The chain is Endoglucanase 21 (KOR3) from Arabidopsis thaliana (Mouse-ear cress).